Here is a 308-residue protein sequence, read N- to C-terminus: MSDEDLFLTALLDSLGKEVNTVLNNSPIKVEEKDGDFKAEDIPSPSSDTWVKLPEVVAVVCDLKGSTHLGTGKHDTSTARIYKSGVEGAVRVFHEFGANFIDIQGDGGFGLFWGERAHERALCAGVTIRTFSEEFVERLEKRWPEGLPETGYKVGIHAARTLVKRIGTKREISEQEAVWAGRPVNYAAKCAQSADRHQVIITQAVWDKMKDNDFIAFSCDCGDGPTANLWTDVTVDRLPEEDRDAVVLNSPWCKTCGPAFCEAIMAGEKKRDIPSAVRTGINRMKMQKALEAKRLRDSSRNSALRGVR.

Residues D62 and D106 each contribute to the Mn(2+) site.

This sequence belongs to the adenylyl cyclase class-4/guanylyl cyclase family. Pyrimidine cyclase subfamily. Homodimer. It depends on Mn(2+) as a cofactor.

Its subcellular location is the cytoplasm. The catalysed reaction is GTP = 3',5'-cyclic GMP + diphosphate. It carries out the reaction UTP = 3',5'-cyclic UMP + diphosphate. Functionally, pycsar (pyrimidine cyclase system for antiphage resistance) provides immunity against bacteriophage. The pyrimidine cyclase (PycC) synthesizes cyclic nucleotides in response to infection; these serve as specific second messenger signals. The signals activate the adjacent effector, leading to bacterial cell death and abortive phage infection. A clade D Pycsar system. In terms of biological role, the pyrimidine cyclase gene of a two-gene Pycsar system, generates cyclic UMP (cUMP) from UTP as well as cGMP from GTP to a lesser extent, has little to no activity on ATP or CTP. Expression of this and adjacent effector PtPycTM (AC A0A4Q9KQH5) probably confers resistance to bacteriophage. The genes are probably only expressed in response to bacteriophage infection. This is Uridylate cyclase from Propioniciclava tarda.